A 343-amino-acid polypeptide reads, in one-letter code: MEMEERKLKILQAIINDYINNGEPVGSRTIAKKYNLGISSATIRNEMADLEEMGYIEQLHTSSGRKPSDKGYRLYVDRLMEIPSMSVEEEMLIKAKIIDSALYEIDKLVKQAMSLVSEMTKLTCVVKSLSARKSYIKSISLINIEPNMILCVFITDSGMIKNSIIRVKSNIENSSLERIANILNSKLKGLTIEQINLEVINNIKKDLREYGHIFDCIMPNLYDILREADSTEVYKEGTMNIFNYPEFKDIEKAKEFLSVIDDRRILDTLFNASGGVTVNIGNENSIKEARDFSVVSSVYKYNGRPLGTIGIIGPTRIPYSKVIKVIMEVVDQINNNLDKMNNS.

The protein belongs to the HrcA family.

Negative regulator of class I heat shock genes (grpE-dnaK-dnaJ and groELS operons). Prevents heat-shock induction of these operons. In Clostridium acetobutylicum (strain ATCC 824 / DSM 792 / JCM 1419 / IAM 19013 / LMG 5710 / NBRC 13948 / NRRL B-527 / VKM B-1787 / 2291 / W), this protein is Heat-inducible transcription repressor HrcA.